The primary structure comprises 190 residues: UPF0301 protein PSPTO_5037 (190 aa).

Belongs to the UPF0301 (AlgH) family.

This chain is UPF0301 protein PSPTO_5037, found in Pseudomonas syringae pv. tomato (strain ATCC BAA-871 / DC3000).